The following is a 228-amino-acid chain: Ankyrin repeat domain-containing protein 46 (228 aa).

ANK repeat units follow at residues 11 to 40 (QTNV…DPNI), 44 to 73 (RGRT…DLLA), 77 to 103 (QGNT…KIDI), and 107 to 138 (QGAT…EVKG). The chain crosses the membrane as a helical span at residues 195-215 (VLLLIFVIALLSLGIAYYVSG).

The protein localises to the membrane. This is Ankyrin repeat domain-containing protein 46 (ANKRD46) from Bos taurus (Bovine).